The following is a 226-amino-acid chain: Ribosomal RNA small subunit methyltransferase G (226 aa).

Residues glycine 86, leucine 91, 137–138 (VE), and arginine 150 each bind S-adenosyl-L-methionine.

The protein belongs to the methyltransferase superfamily. RNA methyltransferase RsmG family.

Its subcellular location is the cytoplasm. It carries out the reaction guanosine(527) in 16S rRNA + S-adenosyl-L-methionine = N(7)-methylguanosine(527) in 16S rRNA + S-adenosyl-L-homocysteine. Functionally, specifically methylates the N7 position of guanine in position 527 of 16S rRNA. This chain is Ribosomal RNA small subunit methyltransferase G, found in Polaromonas sp. (strain JS666 / ATCC BAA-500).